Here is a 1528-residue protein sequence, read N- to C-terminus: Cell surface antigen I/II (1528 aa).

A signal peptide spans 1–50; it reads MLQKCKLEGIIICNEKRLLGAAKVKSGRTLSGALLGTAILASGAGQKALA. Positions 50–156 are disordered; sequence AEETSTTSTS…PEIKDDYSKQ (107 aa). Residues 51 to 68 are compositionally biased toward low complexity; that stretch reads EETSTTSTSGGDTAVVGT. 2 stretches are compositionally biased toward polar residues: residues 83–97 and 124–133; these read NPSS…QARQ and TVSQDATVNK. Basic and acidic residues predominate over residues 142 to 154; sequence ANQKEPEIKDDYS. 4 Ag I/II A repeats span residues 161–235, 236–315, 316–396, and 397–478; these read QKAT…QQAN, SDSQ…QAGN, AANE…QSGN, and AANE…KKDL. Disordered regions lie at residues 840 to 951 and 1459 to 1480; these read VPKV…VEPV and SNTV…PKTT. The span at 855-879 shows a compositional bias: basic and acidic residues; sequence TKPDEPTYEVEKELVDLPVEPKYEP. The segment covering 1459-1468 has biased composition (polar residues); the sequence is SNTVRTSTPE. The short motif at 1503 to 1507 is the LPXTG sorting signal element; that stretch reads LPATG. The residue at position 1506 (Thr1506) is a Pentaglycyl murein peptidoglycan amidated threonine. Residues 1507-1528 constitute a propeptide, removed by sortase; the sequence is GDSSNAYLPLLGLVSLTAGFSC.

Belongs to the antigen I/II family.

It is found in the secreted. Its subcellular location is the cell wall. The polypeptide is Cell surface antigen I/II (Streptococcus downei (Streptococcus sobrinus)).